The chain runs to 808 residues: Spindle assembly abnormal protein 4 (808 aa).

The segment at 1-151 is disordered; the sequence is MASDENIGAD…PDEPSTLVNS (151 aa). The span at 42-54 shows a compositional bias: low complexity; sequence PPTSELSSASSPS. Polar residues-rich tracts occupy residues 61–78 and 85–104; these read SLSN…SGIS and PPTT…SPEN. Basic and acidic residues predominate over residues 113–123; the sequence is AEEHGHSGQHA. The segment covering 124–133 has biased composition (acidic residues); it reads EEEEDNDTDE. Positions 161–181 form a coiled coil; the sequence is KYKNAAAEFKAFERRMDSMRS. Disordered regions lie at residues 187-206 and 271-298; these read TSLA…PPTR and VTAP…DENR. The segment covering 280–294 has biased composition (polar residues); it reads MMNSSRQNPQNGNVQ. Residues 314-503 adopt a coiled-coil conformation; the sequence is LDRQKLEIEI…ERDDKEKEMF (190 aa). Residues 511–529 show a composition bias toward polar residues; the sequence is KTSNPVPPVLNQSVPISIT. The interval 511 to 564 is disordered; that stretch reads KTSNPVPPVLNQSVPISITSNGPSRHPSSSSLTTFRKPSTSNRERGVSWADEPN. The segment covering 530–541 has biased composition (low complexity); it reads SNGPSRHPSSSS. Over residues 542 to 551 the composition is skewed to polar residues; that stretch reads LTTFRKPSTS.

Interacts with hyls-1; leading to hyls-1 localization into newly forming centrioles.

It is found in the cytoplasm. The protein resides in the cytoskeleton. It localises to the microtubule organizing center. The protein localises to the centrosome. In terms of biological role, required for centrosome duplication. Plays a central role in determining centrosome size. This chain is Spindle assembly abnormal protein 4 (sas-4), found in Caenorhabditis elegans.